Consider the following 754-residue polypeptide: Probable galactinol--sucrose galactosyltransferase 1 (754 aa).

Belongs to the glycosyl hydrolases 36 family.

The enzyme catalyses alpha-D-galactosyl-(1-&gt;3)-1D-myo-inositol + sucrose = raffinose + myo-inositol. Transglycosidase operating by a ping-pong reaction mechanism. Involved in the synthesis of raffinose, a major soluble carbohydrate in seeds, roots and tubers. The polypeptide is Probable galactinol--sucrose galactosyltransferase 1 (RFS1) (Arabidopsis thaliana (Mouse-ear cress)).